The following is a 396-amino-acid chain: ATP-dependent RNA helicase eIF4A (396 aa).

The Q motif motif lies at 22-50; that stretch reads HKFDELKLKEVLLRGIYGYGFVDPSAIQQ. A Helicase ATP-binding domain is found at 53 to 223; it reads ILPIIEGHDV…DKFMNKPVRI (171 aa). 66–73 lines the ATP pocket; that stretch reads AQSGTGKT. A DEAD box motif is present at residues 171–174; that stretch reads DEAD. A Helicase C-terminal domain is found at 234 to 395; it reads GIQQYYINVE…ELPANIADLF (162 aa).

It belongs to the DEAD box helicase family. eIF4A subfamily. Component of the eIF4F complex, which composition varies with external and internal environmental conditions. It is composed of at least eIF4A, eIF4E and eIF4G.

It is found in the cytoplasm. The enzyme catalyses ATP + H2O = ADP + phosphate + H(+). Functionally, ATP-dependent RNA helicase which is a subunit of the eIF4F complex involved in cap recognition and is required for mRNA binding to ribosome. In the current model of translation initiation, eIF4A unwinds RNA secondary structures in the 5'-UTR of mRNAs which is necessary to allow efficient binding of the small ribosomal subunit, and subsequent scanning for the initiator codon. The polypeptide is ATP-dependent RNA helicase eIF4A (TIF1) (Eremothecium gossypii (strain ATCC 10895 / CBS 109.51 / FGSC 9923 / NRRL Y-1056) (Yeast)).